Consider the following 315-residue polypeptide: Lipoyl synthase (315 aa).

7 residues coordinate [4Fe-4S] cluster: C62, C67, C73, C88, C92, C95, and S302. A Radical SAM core domain is found at 74–292 (FNHGTATFMI…KIALKLGFIR (219 aa)).

It belongs to the radical SAM superfamily. Lipoyl synthase family. [4Fe-4S] cluster is required as a cofactor.

It is found in the cytoplasm. It catalyses the reaction [[Fe-S] cluster scaffold protein carrying a second [4Fe-4S](2+) cluster] + N(6)-octanoyl-L-lysyl-[protein] + 2 oxidized [2Fe-2S]-[ferredoxin] + 2 S-adenosyl-L-methionine + 4 H(+) = [[Fe-S] cluster scaffold protein] + N(6)-[(R)-dihydrolipoyl]-L-lysyl-[protein] + 4 Fe(3+) + 2 hydrogen sulfide + 2 5'-deoxyadenosine + 2 L-methionine + 2 reduced [2Fe-2S]-[ferredoxin]. Its pathway is protein modification; protein lipoylation via endogenous pathway; protein N(6)-(lipoyl)lysine from octanoyl-[acyl-carrier-protein]: step 2/2. Catalyzes the radical-mediated insertion of two sulfur atoms into the C-6 and C-8 positions of the octanoyl moiety bound to the lipoyl domains of lipoate-dependent enzymes, thereby converting the octanoylated domains into lipoylated derivatives. The chain is Lipoyl synthase from Vesicomyosocius okutanii subsp. Calyptogena okutanii (strain HA).